Reading from the N-terminus, the 333-residue chain is MNPTFILAALCLGIASATLTFNHSLEAQWTKWKAMHNRLYGMNEEGWRRAVWEKNMKMIELHNQEYSQGKHSFTMAMNTFGDMTSEEFRQVMNGFQNRKPRKGKVFQEPLFYEAPRSVDWREKGYVTPVKNQGQCGSCWAFSATGALEGQMFRKTGKLVSLSEQNLVDCSGPQGNEGCNGGLMDYAFQYVADNGGLDSEESYPYEATEESCKYNPEYSVANDTGFVDIPKQEKALMKAVATVGPISVAIDAGHESFMFYKEGIYFEPDCSSEDMDHGVLVVGYGFESTESDNSKYWLVKNSWGEEWGMGGYIKMAKDRRNHCGIASAASYPTV.

The N-terminal stretch at 1–17 (MNPTFILAALCLGIASA) is a signal peptide. The propeptide at 18–113 (TLTFNHSLEA…KVFQEPLFYE (96 aa)) is activation peptide. Glutamate 122 contacts Zn(2+). 2 disulfide bridges follow: cysteine 135–cysteine 178 and cysteine 169–cysteine 211. Residue cysteine 138 is part of the active site. Residues glutamate 163, aspartate 184, glutamate 199, glutamate 205, glutamate 209, aspartate 227, aspartate 250, histidine 253, aspartate 273, and aspartate 275 each contribute to the Zn(2+) site. Cysteine 269 and cysteine 322 are oxidised to a cystine. Histidine 276 is a catalytic residue. The propeptide occupies 289–291 (ESD). The active site involves asparagine 300.

It belongs to the peptidase C1 family. As to quaternary structure, dimer of a heavy and a light chain linked by disulfide bonds. Interacts with Long isoform of CD74/Ii chain; the interaction stabilizes the conformation of mature CTSL. In terms of processing, during export along the endocytic pathway, pro-CTSL undergoes several proteolytic cleavages to generate the CTSL single-chain and two-chain mature forms, composed of a heavy chain linked to a light chain by disulfide bonds. Autocleavage; produces the single-chain CTSL after cleavage of the propeptide. The cleavage can be intermolecular.

The protein localises to the lysosome. It localises to the apical cell membrane. The protein resides in the cytoplasmic vesicle. Its subcellular location is the secretory vesicle. It is found in the chromaffin granule. The protein localises to the secreted. It localises to the extracellular space. The catalysed reaction is Specificity close to that of papain. As compared to cathepsin B, cathepsin L exhibits higher activity toward protein substrates, but has little activity on Z-Arg-Arg-NHMec, and no peptidyl-dipeptidase activity.. Its activity is regulated as follows. Inhibited by the propeptide produced by autocleavage. Long isoform of CD74/Ii chain stabilizes the conformation of mature CTSL by binding to its active site and serving as a chaperone to help maintain a pool of mature enzyme in endocytic compartments and extracellular space of APCs. IFNG enhances the conversion into the CTSL mature and active form. Inhibited by CST6. Inhibited by the glycopeptide antibiotic teicoplanin. Inhibited by amantadine. Functionally, thiol protease important for the overall degradation of proteins in lysosomes. Plays a critical for normal cellular functions such as general protein turnover, antigen processing and bone remodeling. Involved in the solubilization of cross-linked TG/thyroglobulin and in the subsequent release of thyroid hormone thyroxine (T4) by limited proteolysis of TG/thyroglobulin in the thyroid follicle lumen. In neuroendocrine chromaffin cells secretory vesicles, catalyzes the prohormone proenkephalin processing to the active enkephalin peptide neurotransmitter. In thymus, regulates CD4(+) T cell positive selection by generating the major histocompatibility complex class II (MHCII) bound peptide ligands presented by cortical thymic epithelial cells. Also mediates invariant chain processing in cortical thymic epithelial cells. Major elastin-degrading enzyme at neutral pH. Accumulates as a mature and active enzyme in the extracellular space of antigen presenting cells (APCs) to regulate degradation of the extracellular matrix in the course of inflammation. Secreted form generates endostatin from COL18A1. Critical for cardiac morphology and function. Plays an important role in hair follicle morphogenesis and cycling, as well as epidermal differentiation. Required for maximal stimulation of steroidogenesis by TIMP1. This is Procathepsin L (CTSL) from Chlorocebus aethiops (Green monkey).